The chain runs to 554 residues: MPLRLINFRQQRRCRQSPSVARLESIVLNRRELLLDHFQYSLFQNSSEIPMTTILINDRPMRHTHDGRADMTNFEMDLFDTRIEVPTSKNSGGDGMHSPYYDEESSKKRCCKCGNSRNRIIKPACVPISIVSLFIIALVFLPLFNEEDLASPIKLTTGCSVDCKTFLVESIPIGLPFKTNNHTAEAWINIIDNSKQYLDISVMYWNLNTSDYKSSVYGRRVYEAIIRAGKRGVKIRIAQDGASNLSDNKESAYLVQEGLAEVREINVTRLIGSGIIHTKFILSDIATLYIGSANMDWKSLSEVKEVGVVFQECPCVASDLYKIFAAYWKLGENDSVIPEKWPISYRTPFNFSSMAKLTMDGEPAEYFISSSPGPFNPKGREHDLAAIQKIMKDARKSVCISVMDYIPSTLYMKKSNRFWPEIDDSIRDAAYRGVNVRMLISHWDHSRKEMIPFLKSLQTITDGLPRYNRTEHGQVQVRIFTVPPNGKEKIPFTRVNHAKYMVTEDIAYIGTSNWSGDYFISTAGVAMVVRQPSATKRLQNVFDRDWNSEYSKDL.

Over 1 to 123 (MPLRLINFRQ…GNSRNRIIKP (123 aa)) the chain is Cytoplasmic. Residues 124–144 (ACVPISIVSLFIIALVFLPLF) traverse the membrane as a helical; Signal-anchor for type II membrane protein segment. Residues 145–554 (NEEDLASPIK…DWNSEYSKDL (410 aa)) lie on the Extracellular side of the membrane. Residues asparagine 181, asparagine 208, asparagine 244, and asparagine 266 are each glycosylated (N-linked (GlcNAc...) asparagine). Residues 272–299 (GSGIIHTKFILSDIATLYIGSANMDWKS) enclose the PLD phosphodiesterase 1 domain. Catalysis depends on residues histidine 277, lysine 279, and aspartate 284. Residues asparagine 333, asparagine 350, asparagine 468, and asparagine 513 are each glycosylated (N-linked (GlcNAc...) asparagine). Residues 492–518 (FTRVNHAKYMVTEDIAYIGTSNWSGDY) enclose the PLD phosphodiesterase 2 domain.

This sequence belongs to the phospholipase D family.

It is found in the membrane. It catalyses the reaction a 1,2-diacyl-sn-glycero-3-phosphocholine + H2O = a 1,2-diacyl-sn-glycero-3-phosphate + choline + H(+). The sequence is that of Probable phospholipase D F09G2.8 from Caenorhabditis elegans.